We begin with the raw amino-acid sequence, 209 residues long: Thymidylate kinase (209 aa).

10 to 17 serves as a coordination point for ATP; the sequence is GLDGAGKS.

Belongs to the thymidylate kinase family.

It carries out the reaction dTMP + ATP = dTDP + ADP. In terms of biological role, phosphorylation of dTMP to form dTDP in both de novo and salvage pathways of dTTP synthesis. The polypeptide is Thymidylate kinase (Francisella tularensis subsp. novicida (strain U112)).